The chain runs to 304 residues: tRNA dimethylallyltransferase (304 aa).

8-15 contributes to the ATP binding site; it reads GPTASGKS. 10 to 15 is a binding site for substrate; it reads TASGKS. Positions 33 to 36 are interaction with substrate tRNA; it reads DSRQ.

It belongs to the IPP transferase family. As to quaternary structure, monomer. Mg(2+) serves as cofactor.

The catalysed reaction is adenosine(37) in tRNA + dimethylallyl diphosphate = N(6)-dimethylallyladenosine(37) in tRNA + diphosphate. Its function is as follows. Catalyzes the transfer of a dimethylallyl group onto the adenine at position 37 in tRNAs that read codons beginning with uridine, leading to the formation of N6-(dimethylallyl)adenosine (i(6)A). This is tRNA dimethylallyltransferase from Chlorobium luteolum (strain DSM 273 / BCRC 81028 / 2530) (Pelodictyon luteolum).